A 487-amino-acid polypeptide reads, in one-letter code: Chromosomal replication initiator protein DnaA (487 aa).

The tract at residues 1–92 (MTIKGGVVSQ…SELWTANDAT (92 aa)) is domain I, interacts with DnaA modulators. The domain II stretch occupies residues 92–144 (TGRRLDLKSRLEFESVGGAGYEAKAEPIEIVLPVSSDVPALAPTNGSKPSPVQ). Residues 145 to 367 (GLQERFTFDT…GALNTLSARA (223 aa)) form a domain III, AAA+ region region. ATP contacts are provided by Gly189, Gly191, Lys192, and Thr193. Residues 368–487 (GEGVSRLTLE…LETITRKLRG (120 aa)) are domain IV, binds dsDNA.

Belongs to the DnaA family. As to quaternary structure, oligomerizes as a right-handed, spiral filament on DNA at oriC.

It localises to the cytoplasm. Its function is as follows. Plays an essential role in the initiation and regulation of chromosomal replication. ATP-DnaA binds to the origin of replication (oriC) to initiate formation of the DNA replication initiation complex once per cell cycle. Binds the DnaA box (a 9 base pair repeat at the origin) and separates the double-stranded (ds)DNA. Forms a right-handed helical filament on oriC DNA; dsDNA binds to the exterior of the filament while single-stranded (ss)DNA is stabiized in the filament's interior. The ATP-DnaA-oriC complex binds and stabilizes one strand of the AT-rich DNA unwinding element (DUE), permitting loading of DNA polymerase. After initiation quickly degrades to an ADP-DnaA complex that is not apt for DNA replication. Binds acidic phospholipids. The protein is Chromosomal replication initiator protein DnaA of Caulobacter sp. (strain K31).